The primary structure comprises 171 residues: UPF0398 protein M6_Spy1399 (171 aa).

The protein belongs to the UPF0398 family.

The chain is UPF0398 protein M6_Spy1399 from Streptococcus pyogenes serotype M6 (strain ATCC BAA-946 / MGAS10394).